Here is a 321-residue protein sequence, read N- to C-terminus: tRNA uridine(34) hydroxylase (321 aa).

The Rhodanese domain occupies 135 to 233 (DDPDTLVIDT…YLEQVPEEES (99 aa)). Catalysis depends on Cys193, which acts as the Cysteine persulfide intermediate. The interval 301–321 (RQRQMDQLSSASSKKSDDFSL) is disordered.

The protein belongs to the TrhO family.

It carries out the reaction uridine(34) in tRNA + AH2 + O2 = 5-hydroxyuridine(34) in tRNA + A + H2O. Catalyzes oxygen-dependent 5-hydroxyuridine (ho5U) modification at position 34 in tRNAs. The polypeptide is tRNA uridine(34) hydroxylase (Parasynechococcus marenigrum (strain WH8102)).